A 189-amino-acid chain; its full sequence is Nucleoside triphosphate pyrophosphatase (189 aa).

Aspartate 70 acts as the Proton acceptor in catalysis.

This sequence belongs to the Maf family. A divalent metal cation is required as a cofactor.

The protein resides in the cytoplasm. It catalyses the reaction a ribonucleoside 5'-triphosphate + H2O = a ribonucleoside 5'-phosphate + diphosphate + H(+). The catalysed reaction is a 2'-deoxyribonucleoside 5'-triphosphate + H2O = a 2'-deoxyribonucleoside 5'-phosphate + diphosphate + H(+). Functionally, nucleoside triphosphate pyrophosphatase. May have a dual role in cell division arrest and in preventing the incorporation of modified nucleotides into cellular nucleic acids. The protein is Nucleoside triphosphate pyrophosphatase of Xylella fastidiosa (strain M23).